The following is a 316-amino-acid chain: Neuroguidin (316 aa).

Disordered stretches follow at residues 143–172 (SEAD…VKKY) and 280–316 (SALT…RKRH). Residues 145 to 157 (ADEGESDSGEDCA) are compositionally biased toward acidic residues. A compositionally biased stretch (basic residues) spans 297 to 316 (KKSRKGPKKSKKRKGFRKRH).

This sequence belongs to the SAS10 family. As to quaternary structure, part of the small subunit (SSU) processome, composed of more than 70 proteins and the RNA chaperone small nucleolar RNA (snoRNA) U3.

It is found in the nucleus. The protein resides in the nucleolus. The protein localises to the chromosome. It localises to the centromere. Its subcellular location is the cytoplasm. It is found in the cell projection. The protein resides in the axon. The protein localises to the dendrite. It localises to the filopodium. In terms of biological role, part of the small subunit (SSU) processome, first precursor of the small eukaryotic ribosomal subunit. During the assembly of the SSU processome in the nucleolus, many ribosome biogenesis factors, an RNA chaperone and ribosomal proteins associate with the nascent pre-rRNA and work in concert to generate RNA folding, modifications, rearrangements and cleavage as well as targeted degradation of pre-ribosomal RNA by the RNA exosome. Its dissociation from the complex determines the transition from state pre-A1 to state pre-A1*. May inhibit mRNA translation. In Xenopus tropicalis (Western clawed frog), this protein is Neuroguidin (ngdn).